The chain runs to 146 residues: 3-dehydroquinate dehydratase (146 aa).

The Proton acceptor role is filled by Tyr-23. Positions 74, 80, and 87 each coordinate substrate. The Proton donor role is filled by His-100. Residues 101–102 (IS) and Arg-111 contribute to the substrate site.

It belongs to the type-II 3-dehydroquinase family. Homododecamer.

It catalyses the reaction 3-dehydroquinate = 3-dehydroshikimate + H2O. It functions in the pathway metabolic intermediate biosynthesis; chorismate biosynthesis; chorismate from D-erythrose 4-phosphate and phosphoenolpyruvate: step 3/7. Functionally, catalyzes a trans-dehydration via an enolate intermediate. This chain is 3-dehydroquinate dehydratase, found in Bacillus cereus (strain ATCC 10987 / NRS 248).